Here is a 393-residue protein sequence, read N- to C-terminus: Formate-dependent phosphoribosylglycinamide formyltransferase (393 aa).

N(1)-(5-phospho-beta-D-ribosyl)glycinamide contacts are provided by residues 22 to 23 (EL) and E82. ATP-binding positions include R114, K155, 160–165 (SSGKGQ), 195–198 (EGFI), and E203. The region spanning 119-308 (RLAAEELKLP…QFALHARAIL (190 aa)) is the ATP-grasp domain. Mg(2+) is bound by residues E267 and E279. Residues D286, K356, and 363–364 (RR) each bind N(1)-(5-phospho-beta-D-ribosyl)glycinamide.

It belongs to the PurK/PurT family. As to quaternary structure, homodimer.

It catalyses the reaction N(1)-(5-phospho-beta-D-ribosyl)glycinamide + formate + ATP = N(2)-formyl-N(1)-(5-phospho-beta-D-ribosyl)glycinamide + ADP + phosphate + H(+). The protein operates within purine metabolism; IMP biosynthesis via de novo pathway; N(2)-formyl-N(1)-(5-phospho-D-ribosyl)glycinamide from N(1)-(5-phospho-D-ribosyl)glycinamide (formate route): step 1/1. Involved in the de novo purine biosynthesis. Catalyzes the transfer of formate to 5-phospho-ribosyl-glycinamide (GAR), producing 5-phospho-ribosyl-N-formylglycinamide (FGAR). Formate is provided by PurU via hydrolysis of 10-formyl-tetrahydrofolate. This Pseudomonas syringae pv. tomato (strain ATCC BAA-871 / DC3000) protein is Formate-dependent phosphoribosylglycinamide formyltransferase.